The primary structure comprises 332 residues: Glycerol-3-phosphate dehydrogenase [NAD(P)+] (332 aa).

The NADPH site is built by Trp13, Arg33, and Lys107. Sn-glycerol 3-phosphate-binding residues include Lys107, Gly136, and Ser138. Ala140 contributes to the NADPH binding site. Residues Lys191, Asp244, Ser254, Arg255, and Asn256 each contribute to the sn-glycerol 3-phosphate site. Lys191 functions as the Proton acceptor in the catalytic mechanism. Arg255 serves as a coordination point for NADPH. Glu280 serves as a coordination point for NADPH.

The protein belongs to the NAD-dependent glycerol-3-phosphate dehydrogenase family.

Its subcellular location is the cytoplasm. The enzyme catalyses sn-glycerol 3-phosphate + NAD(+) = dihydroxyacetone phosphate + NADH + H(+). It carries out the reaction sn-glycerol 3-phosphate + NADP(+) = dihydroxyacetone phosphate + NADPH + H(+). The protein operates within membrane lipid metabolism; glycerophospholipid metabolism. Its function is as follows. Catalyzes the reduction of the glycolytic intermediate dihydroxyacetone phosphate (DHAP) to sn-glycerol 3-phosphate (G3P), the key precursor for phospholipid synthesis. This is Glycerol-3-phosphate dehydrogenase [NAD(P)+] from Alkalilimnicola ehrlichii (strain ATCC BAA-1101 / DSM 17681 / MLHE-1).